We begin with the raw amino-acid sequence, 155 residues long: Ribosomal RNA large subunit methyltransferase H (155 aa).

Residues L73, G104, and 123-128 (LSPLTL) contribute to the S-adenosyl-L-methionine site.

It belongs to the RNA methyltransferase RlmH family. In terms of assembly, homodimer.

The protein resides in the cytoplasm. It carries out the reaction pseudouridine(1915) in 23S rRNA + S-adenosyl-L-methionine = N(3)-methylpseudouridine(1915) in 23S rRNA + S-adenosyl-L-homocysteine + H(+). Functionally, specifically methylates the pseudouridine at position 1915 (m3Psi1915) in 23S rRNA. This chain is Ribosomal RNA large subunit methyltransferase H, found in Pseudomonas putida (strain ATCC 700007 / DSM 6899 / JCM 31910 / BCRC 17059 / LMG 24140 / F1).